The chain runs to 266 residues: Basic endochitinase C (266 aa).

Residues 1–23 (MRSLAVVVAVVATVAMAIGTAHG) form the signal peptide. Disulfide bonds link Cys-46-Cys-108, Cys-120-Cys-128, and Cys-246-Cys-259. The Proton donor role is filled by Glu-90.

This sequence belongs to the glycosyl hydrolase 19 family. Chitinase class II subfamily. Localized to the starchy endoderm of the seed May localize to other parts of the seed including the aleurone cells (at protein level).

The enzyme catalyses Random endo-hydrolysis of N-acetyl-beta-D-glucosaminide (1-&gt;4)-beta-linkages in chitin and chitodextrins.. In terms of biological role, defense against chitin-containing fungal pathogens. Binds the hyphal tips of fungi and degrades nascent chitin. The polypeptide is Basic endochitinase C (Secale cereale (Rye)).